Consider the following 325-residue polypeptide: uncharacterized protein (325 aa).

This is an uncharacterized protein from Escherichia coli (Bacteriophage T4).